Here is a 545-residue protein sequence, read N- to C-terminus: Methionine--tRNA ligase (545 aa).

Positions Pro15–His25 match the 'HIGH' region motif. Residues Cys146, Cys149, Cys159, and Cys162 each contribute to the Zn(2+) site. Residues Lys332–Ser336 carry the 'KMSKS' region motif. ATP is bound at residue Lys335.

Belongs to the class-I aminoacyl-tRNA synthetase family. MetG type 1 subfamily. Monomer. Requires Zn(2+) as cofactor.

It localises to the cytoplasm. The catalysed reaction is tRNA(Met) + L-methionine + ATP = L-methionyl-tRNA(Met) + AMP + diphosphate. In terms of biological role, is required not only for elongation of protein synthesis but also for the initiation of all mRNA translation through initiator tRNA(fMet) aminoacylation. This is Methionine--tRNA ligase from Hamiltonella defensa subsp. Acyrthosiphon pisum (strain 5AT).